The sequence spans 303 residues: MAVTKELLQMDLYALLGIEEKAADKEVKKAYRQKALSCHPDKNPDNPRAAELFHQLSQALEVLTDAAARAAYDKVRKAKKQAAERTQRLDENRKKVKLDLEARERQAQAHGSEEEEESRSATTLEQEIARLREEGSRQLEEQQRLIQEQIRQDREQRLRGRTENTEGKGTPKLKLKWKCKKEDESQGGYSRDVLLRLLQKYGEVLNLVLSRKKAGNAIVEFATVRAAELAVRNEVGLADNPLKVSWLEGQPQSTVDPGPPGLSKGSVLSERDFESLVMMRMRQAAERQQLIAQMQQEDEGRPT.

Positions 11–76 (DLYALLGIEE…AARAAYDKVR (66 aa)) constitute a J domain. Disordered regions lie at residues 104–123 (ERQAQAHGSEEEEESRSATT) and 150–170 (IRQDREQRLRGRTENTEGKGT). Ser112 carries the post-translational modification Phosphoserine. A compositionally biased stretch (basic and acidic residues) spans 150-166 (IRQDREQRLRGRTENTE). The 72-residue stretch at 178–249 (KCKKEDESQG…NPLKVSWLEG (72 aa)) folds into the RRM domain. Residue Lys264 is modified to N6-methyllysine.

In terms of tissue distribution, expressed in the thyroid gland.

The protein resides in the cytoplasm. The protein localises to the nucleus. Its function is as follows. May negatively affect PAX8-induced thyroglobulin/TG transcription. The polypeptide is DnaJ homolog subfamily C member 17 (Dnajc17) (Mus musculus (Mouse)).